Reading from the N-terminus, the 484-residue chain is Suppressor of fused homolog (484 aa).

The disordered stretch occupies residues 1-24 (MAELRPSGAPGPTAPPAPGPTAPP). Residues 12-23 (PTAPPAPGPTAP) show a composition bias toward pro residues. Residue Lys257 forms a Glycyl lysine isopeptide (Lys-Gly) (interchain with G-Cter in ubiquitin) linkage. Positions 279 to 360 (SRPPEDDEDS…SSTAIIPHEL (82 aa)) are disordered. Phosphoserine is present on Ser301. Lys303 bears the N6-acetyllysine mark. Residue Lys321 forms a Glycyl lysine isopeptide (Lys-Gly) (interchain with G-Cter in SUMO2) linkage. The segment covering 336 to 347 (AHDRAPSRKDSL) has biased composition (basic and acidic residues). Phosphoserine is present on residues Ser342, Ser346, and Ser352. A Phosphothreonine modification is found at Thr353. The residue at position 481 (Ser481) is a Phosphoserine.

It belongs to the SUFU family. May form homodimers. Part of a DNA-bound corepressor complex containing SAP18, GLI1 and SIN3. Part of a complex containing CTNNB1. Binds BTRC, GLI2, GLI3, SAP18 and STK36. Binds both free and DNA-bound GLI1. Interacts with KIF7. Interacts with GLI3FL and this interaction regulates the formation of either repressor or activator forms of GLI3. Its association with GLI3FL is regulated by Hh signaling and dissociation of the SUFU-GLI3 interaction requires the presence of the ciliary motor KIF3A. Interacts with ULK3; inactivating the protein kinase activity of ULK3. Interacts with RAB23. Polyubiquitinated at Lys-257 by the SCF(FBXL17) complex, leading to its subsequent degradation and allowing the release of GLI1 for proper hedgehog/smoothened signal transduction. Ubiquitination is impaired by phosphorylation at Ser-342, Ser-346, Ser-352 and Thr-353. Post-translationally, phosphorylation at Ser-342, Ser-346, Ser-352 and Thr-353 prevents ubiquitination by the SCF(FBXL17) complex. In terms of tissue distribution, ubiquitous in adult tissues. Detected in osteoblasts of the perichondrium in the developing limb of 12-week old embryos. Isoform 1 is detected in fetal brain, lung, kidney and testis. Isoform 2 is detected in fetal testis, and at much lower levels in fetal brain, lung and kidney.

The protein resides in the cytoplasm. Its subcellular location is the nucleus. Its function is as follows. Negative regulator in the hedgehog/smoothened signaling pathway. Down-regulates GLI1-mediated transactivation of target genes. Down-regulates GLI2-mediated transactivation of target genes. Part of a corepressor complex that acts on DNA-bound GLI1. May also act by linking GLI1 to BTRC and thereby targeting GLI1 to degradation by the proteasome. Sequesters GLI1, GLI2 and GLI3 in the cytoplasm, this effect is overcome by binding of STK36 to both SUFU and a GLI protein. Negative regulator of beta-catenin signaling. Regulates the formation of either the repressor form (GLI3R) or the activator form (GLI3A) of the full-length form of GLI3 (GLI3FL). GLI3FL is complexed with SUFU in the cytoplasm and is maintained in a neutral state. Without the Hh signal, the SUFU-GLI3 complex is recruited to cilia, leading to the efficient processing of GLI3FL into GLI3R. When Hh signaling is initiated, SUFU dissociates from GLI3FL and the latter translocates to the nucleus, where it is phosphorylated, destabilized, and converted to a transcriptional activator (GLI3A). Required for normal embryonic development. Required for the proper formation of hair follicles and the control of epidermal differentiation. The chain is Suppressor of fused homolog from Homo sapiens (Human).